A 720-amino-acid polypeptide reads, in one-letter code: Receptor-like protein CLAVATA2 (720 aa).

The N-terminal stretch at 1 to 25 is a signal peptide; that stretch reads MIKIADFTLFFFIFVFSPSLPLAQS. An N-cap region spans residues 26 to 92; sequence QLPDLDPQDK…LNLSSQIHPS (67 aa). Topologically, residues 26–686 are extracellular; that stretch reads QLPDLDPQDK…QNELVEGPIS (661 aa). N-linked (GlcNAc...) asparagine glycosylation is found at asparagine 49, asparagine 62, asparagine 84, asparagine 108, asparagine 127, and asparagine 168. A disulfide bridge links cysteine 60 with cysteine 68. 21 LRR repeats span residues 96 to 122, 124 to 144, 146 to 168, 170 to 194, 195 to 217, 219 to 238, 239 to 263, 264 to 287, 288 to 311, 314 to 338, 339 to 362, 364 to 386, 388 to 410, 411 to 436, 438 to 458, 459 to 482, 484 to 506, 547 to 571, 573 to 594, 595 to 617, and 619 to 641; these read LSSLQSLDLSHNNFSGNIPSCFGSLRN, RTLNLSRNRFVGSIPATFVSL, ELREVVLSENRDLGGVVPHWFGN, SMNLERVDFSFCSFVGELPESLLYL, KSLKYLNLESNNMTGTLRDFQQP, VVLNLASNQFSGTLPCFYAS, RPSLSILNIAENSLVGGLPSCLGSL, KELSHLNLSFNGFNYEISPRLMFS, EKLVMLDLSHNGFSGRLPSRISET, KLGLVLLDLSHNSFSGDIPLRITEL, KSLQALRLSHNLLTGDIPARIGNL, YLQVIDLSHNALTGSIPLNIVGC, QLLALMISNNNLSGEIQPELDAL, DSLKILDISNNHISGEIPLTLAGLKS, EIVDISSNNLSGNLNEAITKW, SNLKYLSLARNKFSGTLPSWLFKF, KIQMIDYSSNRFSWFIPDDNLNS, LLSMVGIDLSDNLLHGEIPEALFRQ, NIEYLNLSYNFLEGQLPRLEKL, PRLKALDLSHNSLSGQVIGNISA, and PGLTLLNLSHNCFSGIITEKEGL. An N-linked (GlcNAc...) asparagine glycan is attached at asparagine 206. N-linked (GlcNAc...) asparagine glycosylation is present at asparagine 270. A glycan (N-linked (GlcNAc...) asparagine) is linked at asparagine 361. Asparagine 398 carries N-linked (GlcNAc...) asparagine glycosylation. N-linked (GlcNAc...) asparagine glycosylation occurs at asparagine 446. Asparagine 505 carries an N-linked (GlcNAc...) asparagine glycan. Residues asparagine 578, asparagine 614, and asparagine 625 are each glycosylated (N-linked (GlcNAc...) asparagine). The C-cap/acidic domain stretch occupies residues 649–682; that stretch reads AGNPELCVETPGSKCDPANIDASQEEIYQNELVE. Residues 687 to 707 form a helical membrane-spanning segment; the sequence is IWIFCLSAFISFDFGVLGIFC. The Cytoplasmic segment spans residues 708–720; sequence SARARSYILQTKA.

This sequence belongs to the RLP family. In terms of assembly, parts of a tetrameric complex made of two CLV2/CRN heterodimers that can interact with CLV3 and CLE peptides. CLV2/CRN heterodimer interacts with CLV1 homodimers. Interacts with CRN; this dimer can interact with BAM3. Interacts with CLE14. Mostly expressed in apices (e.g. shoot apical meristem and flower buds), and, to a lower extent, in flowers, leaves, seedlings and siliques. Also expressed in the inner tissues of the proximal root meristem. Expressed throughout the vascular cylinder of root tips.

It localises to the cell membrane. It is found in the endoplasmic reticulum membrane. Involved in the perception of CLV3 and CLV3-like (CLE) peptides, that act as extracellular signals regulating meristems maintenance. Required for the sensing of the root CLE peptides (e.g. CLE8, CLE9/CLE10, CLE11, CLE13, CLE14, CLE16, CLE17, CLE18, CLE20, CLE21, CLE25, CLE26, CLE40, CLE41/CLE44 and CLE45), which also involves CRN and leads to root growth regulation, mostly in the phloem and protophloem. Involved in controlling the stem cell population size in shoot and root apical meristems, and during organ development. Promotes the formation of CLV1 multimers. In complex with CRN, perceives secreted CLV3-like effector proteins from plant-parasitic cyst nematodes as ligand mimics of the plant CLE signaling pathway. This recognition is required for proper feeding structure (syncytium) development and ultimately successful nematode infection. CLE14 perception by CLV2/CRN complex triggers root meristem differentiation. This Arabidopsis thaliana (Mouse-ear cress) protein is Receptor-like protein CLAVATA2.